The sequence spans 340 residues: MKHHNYYPSTCLSILPFLLPLTMSHPQQNLLATTTSNTKAGNPVFPGWYADPEARLFNAQYWIYPTYSADYSEQTFFDAFSSPDLLTWTKHPTILNITNIPWSTNRAAWAPSVGRRLRSSANAEEEYDYFLYFSVGDGTGIGVAKSTTGKPEGPYEDVLGEPLVNGTVYGAEAIDAQIFQDDDGRNWLYFGGWSHAVVVELGEDMISLKGDYLEITPEGYVEGPWMLKRNGIYYYMFSVGGWGDNSYGVSYVTADSPTGPFSSTPKKILQGNDAVGTSTGHNSVFTPDGQDYYIVYHRRYVNDTARDHRVTCIDRMYFNEAGEILPVNITLEGVEGRTLS.

An N-terminal signal peptide occupies residues Met-1–Ser-24. Asp-51 functions as the Proton acceptor in the catalytic mechanism. N-linked (GlcNAc...) asparagine glycosylation is found at Asn-96 and Asn-165. Residue Glu-222 is the Proton donor of the active site. N-linked (GlcNAc...) asparagine glycans are attached at residues Asn-302 and Asn-328.

This sequence belongs to the glycosyl hydrolase 43 family.

Its subcellular location is the secreted. It participates in glycan degradation. Its function is as follows. Glycoside hydrolase family 43 beta-D-galactofuranosidase involved in the degradation of beta-galactofuranoside (Galf)-containing glycans such as galactomannan or O-glycans. Is not active on beta-1,5- or beta-1,6-linked beta-D-galactofuranose (Galf) residues. The protein is Beta-D-galactofuranosidase xynD of Aspergillus niger (strain ATCC MYA-4892 / CBS 513.88 / FGSC A1513).